The primary structure comprises 615 residues: DNA mismatch repair protein MutL (615 aa).

Positions 362–397 (HFAEPAVREPVAPRYSPAPASGSRPAASWPNAQPGY) are disordered. Over residues 373–391 (APRYSPAPASGSRPAASWP) the composition is skewed to low complexity.

Belongs to the DNA mismatch repair MutL/HexB family.

This protein is involved in the repair of mismatches in DNA. It is required for dam-dependent methyl-directed DNA mismatch repair. May act as a 'molecular matchmaker', a protein that promotes the formation of a stable complex between two or more DNA-binding proteins in an ATP-dependent manner without itself being part of a final effector complex. The protein is DNA mismatch repair protein MutL of Escherichia coli O6:H1 (strain CFT073 / ATCC 700928 / UPEC).